The sequence spans 545 residues: MTESIKKILVTCALPYANGPIHLGHMLEHIQADIWVRYQRMRGHEVYFICADDAHGTAIMLKAEKSGINPEKMIEEINQQHQNDFSGFLISYDHYYSTHSDENRELSVAIYQRLKAKGHIKKRAISQLYDPEKKLFLPDRFVKGTCPKCQAPNQYGDNCEACGSTYSSTELIAPKSEVSGATPVIRESEHFFFDLPAFTGMLTQWIHSGALQEQVANKMQTWLTSGLRQWDITRDTPYFGFEIPDAPDKYFYVWLDAPIGYMGSFKNFCDKKENVSFDEFWQTDTKTELYHFIGKDIVYFHSLFWPAVLEGSDFRKPTNLFVHGYITVNGAKMSKSRGTFIEASDYLKHLDPDCLRYYYAAKLSSHIDDIDLNLEDFVQRVNADLVNKVVNLAARNASFINKKFAGILSKELADSELYFTFVQAGLRIANAYHARETSKAIREIMALADLANRYVDEQAPWVLAKKEVDEAKLQSVCSMGIHLFRILMTYLKPVLPALSERSEAFLNTELTWDSINEPLLNHEIKPFKALFNRIDNDKIVAMLKC.

The 'HIGH' region signature appears at 15 to 25; sequence PYANGPIHLGH. Positions 146, 149, 159, and 162 each coordinate Zn(2+). A 'KMSKS' region motif is present at residues 332-336; it reads KMSKS. Residue lysine 335 participates in ATP binding.

This sequence belongs to the class-I aminoacyl-tRNA synthetase family. MetG type 1 subfamily. As to quaternary structure, monomer. It depends on Zn(2+) as a cofactor.

The protein localises to the cytoplasm. The enzyme catalyses tRNA(Met) + L-methionine + ATP = L-methionyl-tRNA(Met) + AMP + diphosphate. Functionally, is required not only for elongation of protein synthesis but also for the initiation of all mRNA translation through initiator tRNA(fMet) aminoacylation. This chain is Methionine--tRNA ligase, found in Hamiltonella defensa subsp. Acyrthosiphon pisum (strain 5AT).